A 179-amino-acid chain; its full sequence is Ribosome maturation factor RimM (179 aa).

Residues 102 to 175 form the PRC barrel domain; that stretch reads VEMWWDRDLV…RIVVDPPPGL (74 aa).

Belongs to the RimM family. Binds ribosomal protein uS19.

The protein resides in the cytoplasm. In terms of biological role, an accessory protein needed during the final step in the assembly of 30S ribosomal subunit, possibly for assembly of the head region. Essential for efficient processing of 16S rRNA. May be needed both before and after RbfA during the maturation of 16S rRNA. It has affinity for free ribosomal 30S subunits but not for 70S ribosomes. The sequence is that of Ribosome maturation factor RimM from Frankia casuarinae (strain DSM 45818 / CECT 9043 / HFP020203 / CcI3).